A 321-amino-acid chain; its full sequence is o-succinylbenzoate synthase (321 aa).

The active-site Proton donor is Lys110. Mg(2+)-binding residues include Asp138, Glu165, and Asp188. Residue Lys212 is the Proton acceptor of the active site.

It belongs to the mandelate racemase/muconate lactonizing enzyme family. MenC type 1 subfamily. It depends on a divalent metal cation as a cofactor.

It carries out the reaction (1R,6R)-6-hydroxy-2-succinyl-cyclohexa-2,4-diene-1-carboxylate = 2-succinylbenzoate + H2O. Its pathway is quinol/quinone metabolism; 1,4-dihydroxy-2-naphthoate biosynthesis; 1,4-dihydroxy-2-naphthoate from chorismate: step 4/7. The protein operates within quinol/quinone metabolism; menaquinone biosynthesis. Its function is as follows. Converts 2-succinyl-6-hydroxy-2,4-cyclohexadiene-1-carboxylate (SHCHC) to 2-succinylbenzoate (OSB). This chain is o-succinylbenzoate synthase, found in Mycolicibacterium smegmatis (strain ATCC 700084 / mc(2)155) (Mycobacterium smegmatis).